A 266-amino-acid polypeptide reads, in one-letter code: ATP synthase subunit a (266 aa).

Transmembrane regions (helical) follow at residues 28-48, 88-108, 141-161, 206-226, and 237-257; these read SINVDSMFFSIALGILFLVIF, LIAPLALTIFVWVFLMNLMDL, DVNITLSMALGVFILVLFYSI, LFGNMYAGELIFILIAGLLPW, and AIFHILIITLQAFIFMVLTVV.

This sequence belongs to the ATPase A chain family. As to quaternary structure, F-type ATPases have 2 components, CF(1) - the catalytic core - and CF(0) - the membrane proton channel. CF(1) has five subunits: alpha(3), beta(3), gamma(1), delta(1), epsilon(1). CF(0) has three main subunits: a(1), b(2) and c(9-12). The alpha and beta chains form an alternating ring which encloses part of the gamma chain. CF(1) is attached to CF(0) by a central stalk formed by the gamma and epsilon chains, while a peripheral stalk is formed by the delta and b chains.

It is found in the cell inner membrane. Its function is as follows. Key component of the proton channel; it plays a direct role in the translocation of protons across the membrane. The polypeptide is ATP synthase subunit a (Pectobacterium carotovorum subsp. carotovorum (strain PC1)).